Reading from the N-terminus, the 173-residue chain is Shikimate kinase (173 aa).

Position 12-17 (12-17 (GSGKTT)) interacts with ATP. Thr16 contributes to the Mg(2+) binding site. Asp34, Arg58, and Gly80 together coordinate substrate. Arg118 contributes to the ATP binding site. Residue Arg136 coordinates substrate.

The protein belongs to the shikimate kinase family. As to quaternary structure, monomer. Mg(2+) is required as a cofactor.

The protein localises to the cytoplasm. The enzyme catalyses shikimate + ATP = 3-phosphoshikimate + ADP + H(+). The protein operates within metabolic intermediate biosynthesis; chorismate biosynthesis; chorismate from D-erythrose 4-phosphate and phosphoenolpyruvate: step 5/7. Catalyzes the specific phosphorylation of the 3-hydroxyl group of shikimic acid using ATP as a cosubstrate. This Moorella thermoacetica (strain ATCC 39073 / JCM 9320) protein is Shikimate kinase.